The chain runs to 56 residues: Lantibiotic subtilin (56 aa).

Residues 1 to 24 (MSKFDDFDLDVVKVSKQDSKITPQ) constitute a propeptide that is removed on maturation. At W25 the chain carries N2-succinyltryptophan; partial. A cross-link (lanthionine (Ser-Cys)) is located at residues 27-31 (SESLC). S29 is subject to 2,3-didehydroalanine (Ser). 4 consecutive cross-links (beta-methyllanthionine (Thr-Cys)) follow at residues 32–35 (TPGC), 37–43 (TGALQTC), 47–50 (TLTC), and 49–52 (TCNC). Residue T42 is modified to (Z)-2,3-didehydrobutyrine. Residue S55 is modified to 2,3-didehydroalanine (Ser).

It belongs to the type A lantibiotic family. Maturation of lantibiotics involves the enzymatic conversion of Thr, and Ser into dehydrated AA and the formation of thioether bonds with cysteine. This is followed by membrane translocation and cleavage of the modified precursor. Post-translationally, succinylated subtilin is 10-20 times less active than subtilin. The ratio subtilin/succinylated subtilin is about 1:2 after 24 hours growth. In terms of processing, the 2,3-didehydrobutyrine is determined to be the Z-isomer.

Lanthionine-containing peptide antibiotic (lantibiotic) active on Gram-positive bacteria. The bactericidal activity of lantibiotics is based on depolarization of energized bacterial cytoplasmic membranes, initiated by the formation of aqueous transmembrane pores. The protein is Lantibiotic subtilin (spaS) of Bacillus subtilis.